We begin with the raw amino-acid sequence, 233 residues long: Hydroxyacylglutathione hydrolase (233 aa).

Positions 52, 54, 56, 57, 108, 125, and 163 each coordinate Zn(2+).

It belongs to the metallo-beta-lactamase superfamily. Glyoxalase II family. In terms of assembly, monomer. It depends on Zn(2+) as a cofactor.

The enzyme catalyses an S-(2-hydroxyacyl)glutathione + H2O = a 2-hydroxy carboxylate + glutathione + H(+). The protein operates within secondary metabolite metabolism; methylglyoxal degradation; (R)-lactate from methylglyoxal: step 2/2. Its function is as follows. Thiolesterase that catalyzes the hydrolysis of S-D-lactoyl-glutathione to form glutathione and D-lactic acid. This chain is Hydroxyacylglutathione hydrolase, found in Pasteurella multocida (strain Pm70).